A 336-amino-acid chain; its full sequence is Phosphate acyltransferase (336 aa).

It belongs to the PlsX family. In terms of assembly, homodimer. Probably interacts with PlsY.

It is found in the cytoplasm. The enzyme catalyses a fatty acyl-[ACP] + phosphate = an acyl phosphate + holo-[ACP]. The protein operates within lipid metabolism; phospholipid metabolism. Its function is as follows. Catalyzes the reversible formation of acyl-phosphate (acyl-PO(4)) from acyl-[acyl-carrier-protein] (acyl-ACP). This enzyme utilizes acyl-ACP as fatty acyl donor, but not acyl-CoA. In Pseudomonas paraeruginosa (strain DSM 24068 / PA7) (Pseudomonas aeruginosa (strain PA7)), this protein is Phosphate acyltransferase.